Consider the following 246-residue polypeptide: Exosome complex component Rrp41 (246 aa).

It belongs to the RNase PH family. Rrp41 subfamily. In terms of assembly, component of the archaeal exosome complex. Forms a hexameric ring-like arrangement composed of 3 Rrp41-Rrp42 heterodimers. The hexameric ring associates with a trimer of Rrp4 and/or Csl4 subunits.

The protein localises to the cytoplasm. Functionally, catalytic component of the exosome, which is a complex involved in RNA degradation. Has 3'-&gt;5' exoribonuclease activity. Can also synthesize heteromeric RNA-tails. The chain is Exosome complex component Rrp41 from Pyrobaculum calidifontis (strain DSM 21063 / JCM 11548 / VA1).